Reading from the N-terminus, the 159-residue chain is Transcriptional repressor NrdR (159 aa).

A disordered region spans residues 1 to 26 (MRCPFCAHDNSQVKDSRPSEDNTSIR). A zinc finger spans residues 3–34 (CPFCAHDNSQVKDSRPSEDNTSIRRRRQCEGC). The segment covering 11–24 (SQVKDSRPSEDNTS) has biased composition (basic and acidic residues). The ATP-cone domain maps to 49–139 (VVVVKSGERR…VYRDFTEARD (91 aa)).

This sequence belongs to the NrdR family. Requires Zn(2+) as cofactor.

In terms of biological role, negatively regulates transcription of bacterial ribonucleotide reductase nrd genes and operons by binding to NrdR-boxes. This chain is Transcriptional repressor NrdR, found in Novosphingobium aromaticivorans (strain ATCC 700278 / DSM 12444 / CCUG 56034 / CIP 105152 / NBRC 16084 / F199).